Here is a 71-residue protein sequence, read N- to C-terminus: uncharacterized protein (71 aa).

A helical transmembrane segment spans residues L44–F66.

It localises to the membrane. This is an uncharacterized protein from Saccharomyces cerevisiae (strain ATCC 204508 / S288c) (Baker's yeast).